The chain runs to 390 residues: Glucose-fructose oxidoreductase domain-containing protein 1 (390 aa).

An N-terminal signal peptide occupies residues 1 to 21 (MLPGVGVFGTSLTSRVIIPLL). 3 N-linked (GlcNAc...) asparagine glycosylation sites follow: N161, N270, and N354.

The protein belongs to the Gfo/Idh/MocA family. As to quaternary structure, homodimer.

Its subcellular location is the secreted. Its function is as follows. Probably catalytically inactive enzyme. Does not bind NAD or NADP. This chain is Glucose-fructose oxidoreductase domain-containing protein 1 (gfod1), found in Xenopus tropicalis (Western clawed frog).